The sequence spans 305 residues: tRNA dimethylallyltransferase (305 aa).

14 to 21 serves as a coordination point for ATP; it reads GPTASGKS. 16-21 lines the substrate pocket; the sequence is TASGKS. The interval 39-42 is interaction with substrate tRNA; it reads DSMQ.

This sequence belongs to the IPP transferase family. As to quaternary structure, monomer. The cofactor is Mg(2+).

It carries out the reaction adenosine(37) in tRNA + dimethylallyl diphosphate = N(6)-dimethylallyladenosine(37) in tRNA + diphosphate. Its function is as follows. Catalyzes the transfer of a dimethylallyl group onto the adenine at position 37 in tRNAs that read codons beginning with uridine, leading to the formation of N6-(dimethylallyl)adenosine (i(6)A). The sequence is that of tRNA dimethylallyltransferase from Bradyrhizobium sp. (strain BTAi1 / ATCC BAA-1182).